Here is a 333-residue protein sequence, read N- to C-terminus: Phosphoribosylformylglycinamidine cyclo-ligase (333 aa).

It belongs to the AIR synthase family.

Its subcellular location is the cytoplasm. It catalyses the reaction 2-formamido-N(1)-(5-O-phospho-beta-D-ribosyl)acetamidine + ATP = 5-amino-1-(5-phospho-beta-D-ribosyl)imidazole + ADP + phosphate + H(+). Its pathway is purine metabolism; IMP biosynthesis via de novo pathway; 5-amino-1-(5-phospho-D-ribosyl)imidazole from N(2)-formyl-N(1)-(5-phospho-D-ribosyl)glycinamide: step 2/2. In Clostridium perfringens (strain ATCC 13124 / DSM 756 / JCM 1290 / NCIMB 6125 / NCTC 8237 / Type A), this protein is Phosphoribosylformylglycinamidine cyclo-ligase.